The chain runs to 356 residues: Arginine kinase (356 aa).

Positions 9–91 (KLEAGFQKLQ…FDPIIEDYHI (83 aa)) constitute a Phosphagen kinase N-terminal domain. 64 to 68 (GVGIY) lines the L-arginine pocket. One can recognise a Phosphagen kinase C-terminal domain in the interval 119–356 (FVISTRVRCG…AELIKLEQSA (238 aa)). ATP contacts are provided by residues 122 to 126 (STRVR) and His185. L-arginine is bound at residue Glu225. Arg229 provides a ligand contact to ATP. Cys271 is a binding site for L-arginine. ATP is bound by residues 280–284 (RASVH) and 309–314 (RGTRGE). Glu314 contributes to the L-arginine binding site.

The protein belongs to the ATP:guanido phosphotransferase family.

The enzyme catalyses L-arginine + ATP = N(omega)-phospho-L-arginine + ADP + H(+). This Artemia franciscana (Brine shrimp) protein is Arginine kinase (ARGK).